The following is a 353-amino-acid chain: Protein RecA (353 aa).

67-74 provides a ligand contact to ATP; that stretch reads GPESSGKT. Residues 330–353 are disordered; it reads SNPNSTPDFSVDDSEGVAETNEDF. The segment covering 339 to 353 has biased composition (acidic residues); the sequence is SVDDSEGVAETNEDF.

It belongs to the RecA family.

The protein localises to the cytoplasm. Functionally, can catalyze the hydrolysis of ATP in the presence of single-stranded DNA, the ATP-dependent uptake of single-stranded DNA by duplex DNA, and the ATP-dependent hybridization of homologous single-stranded DNAs. It interacts with LexA causing its activation and leading to its autocatalytic cleavage. This Shigella sonnei protein is Protein RecA.